The primary structure comprises 705 residues: Polyribonucleotide nucleotidyltransferase (705 aa).

The Mg(2+) site is built by Asp-486 and Asp-492. One can recognise a KH domain in the interval 553 to 612; it reads PQFHTMKVDPEKIRDIIGKGGATIRSITEETGASIDIDDDGTVKIYGDDGDSLQGAINRI. The S1 motif domain occupies 622 to 690; that stretch reads GEVYKGKVVR…QRGRIKLSIK (69 aa).

The protein belongs to the polyribonucleotide nucleotidyltransferase family. As to quaternary structure, component of the RNA degradosome, which is a multiprotein complex involved in RNA processing and mRNA degradation. Requires Mg(2+) as cofactor.

Its subcellular location is the cytoplasm. The enzyme catalyses RNA(n+1) + phosphate = RNA(n) + a ribonucleoside 5'-diphosphate. In terms of biological role, involved in mRNA degradation. Catalyzes the phosphorolysis of single-stranded polyribonucleotides processively in the 3'- to 5'-direction. The polypeptide is Polyribonucleotide nucleotidyltransferase (Teredinibacter turnerae (strain ATCC 39867 / T7901)).